The following is a 283-amino-acid chain: Pantothenate synthetase (283 aa).

An ATP-binding site is contributed by 30–37; it reads MGYLHEGH. His37 (proton donor) is an active-site residue. Gln61 serves as a coordination point for (R)-pantoate. Gln61 contributes to the beta-alanine binding site. 147 to 150 serves as a coordination point for ATP; it reads GRKD. Gln153 lines the (R)-pantoate pocket. ATP-binding positions include Val176 and 184–187; that span reads MSSR.

Belongs to the pantothenate synthetase family. Homodimer.

It is found in the cytoplasm. The enzyme catalyses (R)-pantoate + beta-alanine + ATP = (R)-pantothenate + AMP + diphosphate + H(+). Its pathway is cofactor biosynthesis; (R)-pantothenate biosynthesis; (R)-pantothenate from (R)-pantoate and beta-alanine: step 1/1. Functionally, catalyzes the condensation of pantoate with beta-alanine in an ATP-dependent reaction via a pantoyl-adenylate intermediate. The protein is Pantothenate synthetase of Syntrophotalea carbinolica (strain DSM 2380 / NBRC 103641 / GraBd1) (Pelobacter carbinolicus).